The sequence spans 411 residues: tRNA (uracil(54)-C(5))-methyltransferase (411 aa).

Cysteine 62, cysteine 68, cysteine 71, and cysteine 138 together coordinate [4Fe-4S] cluster. Residues glutamine 254, tyrosine 280, threonine 285, 301–302 (DS), aspartate 328, and aspartate 342 contribute to the S-adenosyl-L-methionine site. The active-site Nucleophile is cysteine 369. The active-site Proton acceptor is glutamate 402.

It belongs to the class I-like SAM-binding methyltransferase superfamily. RNA M5U methyltransferase family.

It carries out the reaction uridine(54) in tRNA + S-adenosyl-L-methionine = 5-methyluridine(54) in tRNA + S-adenosyl-L-homocysteine + H(+). Functionally, catalyzes the formation of 5-methyl-uridine at position 54 (m5U54) in tRNA. The protein is tRNA (uracil(54)-C(5))-methyltransferase of Pyrococcus furiosus (strain ATCC 43587 / DSM 3638 / JCM 8422 / Vc1).